A 628-amino-acid chain; its full sequence is EIN3-binding F-box protein 1 (628 aa).

The F-box domain occupies 61-109 (PVSIDVLPDECLFEIFRRLSGPQERSACAFVSKQWLTLVSSIRQKEIDV).

As to quaternary structure, part of a SCF (SKP1-cullin-F-box) protein ligase complex. Interacts with CUL1, SKP1A/ASK1, SKP1B/ASK2, ASK11, ASK12, ASK13, ASK18, EIN3, and EIL1. As to expression, ubiquitous.

The protein resides in the nucleus. The protein operates within protein modification; protein ubiquitination. Component of SCF(EBF1) E3 ubiquitin ligase complexes, which may mediate the ubiquitination and subsequent proteasomal degradation of target proteins (probably including EIN3 and EIL1). Regulator of the ethylene signaling cascade by modulating the stability of EIN3 and EIL1 proteins. Confers insensitivity to ethylene. This is EIN3-binding F-box protein 1 (EBF1) from Arabidopsis thaliana (Mouse-ear cress).